Consider the following 349-residue polypeptide: GMP reductase (349 aa).

Position 108–131 (108–131) interacts with NADP(+); sequence IDFLKIKKIFLLSSELKYICIDVA. The K(+) site is built by G181 and G183. The active-site Thioimidate intermediate is the C186. Residue 216–239 coordinates NADP(+); it reads IISDGGCTVSGDIAKAFGGGADFV.

It belongs to the IMPDH/GMPR family. GuaC type 1 subfamily. In terms of assembly, homotetramer.

The enzyme catalyses IMP + NH4(+) + NADP(+) = GMP + NADPH + 2 H(+). Its function is as follows. Catalyzes the irreversible NADPH-dependent deamination of GMP to IMP. It functions in the conversion of nucleobase, nucleoside and nucleotide derivatives of G to A nucleotides, and in maintaining the intracellular balance of A and G nucleotides. The protein is GMP reductase of Buchnera aphidicola subsp. Acyrthosiphon pisum (strain 5A).